Consider the following 127-residue polypeptide: MASPKSSTRPNQENQEPQFQDFFPTMAGKLGGEGLIEEICKGFELLMDKDKGVITFESLRRNASTVLGLGDLTDDDVRYMINEGDFDRDGALNQMEFCVLMFRLSPELMEASRCVVTEVIEEEFYRH.

Over residues 1-18 (MASPKSSTRPNQENQEPQ) the composition is skewed to polar residues. The tract at residues 1 to 20 (MASPKSSTRPNQENQEPQFQ) is disordered. Positions 72–107 (LTDDDVRYMINEGDFDRDGALNQMEFCVLMFRLSPE) constitute an EF-hand domain. Residues Asp-85, Asp-87, Asp-89, and Glu-96 each coordinate Ca(2+).

In terms of assembly, interacts with PID.

Its function is as follows. Potential calcium sensor that binds calcium in vitro. The sequence is that of Calcium-binding protein PBP1 (PBP1) from Arabidopsis thaliana (Mouse-ear cress).